The chain runs to 283 residues: ATP phosphoribosyltransferase (283 aa).

This sequence belongs to the ATP phosphoribosyltransferase family. Long subfamily. In terms of assembly, equilibrium between an active dimeric form, an inactive hexameric form and higher aggregates. Interconversion between the various forms is largely reversible and is influenced by the natural substrates and inhibitors of the enzyme. Mg(2+) serves as cofactor.

It localises to the cytoplasm. It carries out the reaction 1-(5-phospho-beta-D-ribosyl)-ATP + diphosphate = 5-phospho-alpha-D-ribose 1-diphosphate + ATP. It participates in amino-acid biosynthesis; L-histidine biosynthesis; L-histidine from 5-phospho-alpha-D-ribose 1-diphosphate: step 1/9. Its activity is regulated as follows. Feedback inhibited by histidine. In terms of biological role, catalyzes the condensation of ATP and 5-phosphoribose 1-diphosphate to form N'-(5'-phosphoribosyl)-ATP (PR-ATP). Has a crucial role in the pathway because the rate of histidine biosynthesis seems to be controlled primarily by regulation of HisG enzymatic activity. The sequence is that of ATP phosphoribosyltransferase from Mycobacterium sp. (strain KMS).